A 382-amino-acid chain; its full sequence is Alkanesulfonate monooxygenase (382 aa).

Belongs to the SsuD family.

It carries out the reaction an alkanesulfonate + FMNH2 + O2 = an aldehyde + FMN + sulfite + H2O + 2 H(+). Its function is as follows. Catalyzes the desulfonation of aliphatic sulfonates. In Ectopseudomonas mendocina (strain ymp) (Pseudomonas mendocina), this protein is Alkanesulfonate monooxygenase.